Reading from the N-terminus, the 615-residue chain is UvrABC system protein C (615 aa).

The region spanning 14–91 is the GIY-YIG domain; sequence TSPGCYIHKD…IKENKPKYNI (78 aa). A UVR domain is found at 196–231; that stretch reads NKIIDELKGKMAAAAQTMEFERAAEYRDLIQAIGTL.

It belongs to the UvrC family. In terms of assembly, interacts with UvrB in an incision complex.

The protein resides in the cytoplasm. Functionally, the UvrABC repair system catalyzes the recognition and processing of DNA lesions. UvrC both incises the 5' and 3' sides of the lesion. The N-terminal half is responsible for the 3' incision and the C-terminal half is responsible for the 5' incision. The chain is UvrABC system protein C from Streptococcus pneumoniae (strain JJA).